Reading from the N-terminus, the 444-residue chain is UDP-N-acetylmuramate--L-alanine ligase (444 aa).

110-116 contributes to the ATP binding site; that stretch reads GAHGKTS.

It belongs to the MurCDEF family.

The protein localises to the cytoplasm. The enzyme catalyses UDP-N-acetyl-alpha-D-muramate + L-alanine + ATP = UDP-N-acetyl-alpha-D-muramoyl-L-alanine + ADP + phosphate + H(+). The protein operates within cell wall biogenesis; peptidoglycan biosynthesis. Its function is as follows. Cell wall formation. This chain is UDP-N-acetylmuramate--L-alanine ligase, found in Streptococcus pneumoniae (strain ATCC 700669 / Spain 23F-1).